Here is a 131-residue protein sequence, read N- to C-terminus: MKKIGILNNEISHVISKMGHTDSLAIGDCGLPIPEETKRIDLALIKNIPTFMDTLKSVMMELQVEEVQIANETQDLSSELFKEIKKQLGHAKITFISHEELKNNLKHCKAVIRTGEQTPYANIILKSGVVF.

H20 acts as the Proton donor in catalysis. Residues D28, H98, and 120–122 (YAN) each bind substrate.

The protein belongs to the RbsD / FucU family. RbsD subfamily. Homodecamer.

The protein resides in the cytoplasm. It catalyses the reaction beta-D-ribopyranose = beta-D-ribofuranose. It functions in the pathway carbohydrate metabolism; D-ribose degradation; D-ribose 5-phosphate from beta-D-ribopyranose: step 1/2. Functionally, catalyzes the interconversion of beta-pyran and beta-furan forms of D-ribose. In Clostridium tetani (strain Massachusetts / E88), this protein is D-ribose pyranase.